A 300-amino-acid polypeptide reads, in one-letter code: Epimerase family protein SAV0769 (300 aa).

It belongs to the NAD(P)-dependent epimerase/dehydratase family. SDR39U1 subfamily.

This is Epimerase family protein SAV0769 from Staphylococcus aureus (strain Mu50 / ATCC 700699).